A 271-amino-acid chain; its full sequence is Protein FANTASTIC FOUR 1 (271 aa).

An FAF domain is found at 114–168; it reads NSFPPPLNSVNGFNNSRMVKSYKEDGRLVVQAIRVCSPPRCFVSERREGRLRLCL. Residues 174-255 are disordered; that stretch reads NSQDAEEEFE…KRRCNENGCE (82 aa). Residues 177–224 show a composition bias toward acidic residues; the sequence is DAEEEFEEEDEDDQYDAEEEEEEEEEEEEEEEEEEEEEEEEEEEDEEG. Residues 237–247 are compositionally biased toward basic residues; that stretch reads GNKKVSNRPKR.

The protein belongs to the fantastic four family. Expressed in the shoot apex, stamens, anthers and young siliques. Detected in provascular and vascular tissue.

Its function is as follows. Able to repress WUS when constitutively overexpressed, but have no effect on CLV3. The sequence is that of Protein FANTASTIC FOUR 1 (FAF1) from Arabidopsis thaliana (Mouse-ear cress).